The primary structure comprises 445 residues: Protein PRRC1 (445 aa).

2 disordered regions span residues 1 to 71 (MMEE…PSAP) and 105 to 167 (PPVS…TGLL). A compositionally biased stretch (polar residues) spans 27–49 (MSSTPVPLAATSSFSSPNVSSME). Positions 59–71 (PQPPLPPVRPSAP) are enriched in pro residues. Phosphoserine is present on residues Ser209 and Ser408.

It belongs to the PRRC1 family. As to quaternary structure, interacts with PRKAR1A; resulting in PKA activation. Ubiquitously expressed with higher expression in kidney, liver and placenta. Detected in embryonic kidney cells (HEK293 cells) (at protein level). As to expression, specifically expressed in liver.

The protein resides in the golgi apparatus. The protein localises to the cytoplasm. Functionally, may act as a regulator of the protein kinase A (PKA) activity during embryonic development. The chain is Protein PRRC1 (PRRC1) from Homo sapiens (Human).